A 282-amino-acid chain; its full sequence is NADPH-dependent 7-cyano-7-deazaguanine reductase (282 aa).

88-90 (IES) provides a ligand contact to substrate. Residue 90-91 (SK) coordinates NADPH. The active-site Thioimide intermediate is Cys-190. The active-site Proton donor is Asp-197. 229–230 (HE) contacts substrate. 258 to 259 (RG) is an NADPH binding site.

The protein belongs to the GTP cyclohydrolase I family. QueF type 2 subfamily. In terms of assembly, homodimer.

Its subcellular location is the cytoplasm. The enzyme catalyses 7-aminomethyl-7-carbaguanine + 2 NADP(+) = 7-cyano-7-deazaguanine + 2 NADPH + 3 H(+). The protein operates within tRNA modification; tRNA-queuosine biosynthesis. In terms of biological role, catalyzes the NADPH-dependent reduction of 7-cyano-7-deazaguanine (preQ0) to 7-aminomethyl-7-deazaguanine (preQ1). The sequence is that of NADPH-dependent 7-cyano-7-deazaguanine reductase from Escherichia coli (strain SMS-3-5 / SECEC).